We begin with the raw amino-acid sequence, 76 residues long: Putative membrane protein insertion efficiency factor (76 aa).

This sequence belongs to the UPF0161 family.

Its subcellular location is the cell inner membrane. In terms of biological role, could be involved in insertion of integral membrane proteins into the membrane. The chain is Putative membrane protein insertion efficiency factor from Porphyromonas gingivalis (strain ATCC 33277 / DSM 20709 / CIP 103683 / JCM 12257 / NCTC 11834 / 2561).